The sequence spans 339 residues: Tetraacyldisaccharide 4'-kinase (339 aa).

62-69 contacts ATP; that stretch reads VAGGTGKT.

This sequence belongs to the LpxK family.

It catalyses the reaction a lipid A disaccharide + ATP = a lipid IVA + ADP + H(+). It participates in glycolipid biosynthesis; lipid IV(A) biosynthesis; lipid IV(A) from (3R)-3-hydroxytetradecanoyl-[acyl-carrier-protein] and UDP-N-acetyl-alpha-D-glucosamine: step 6/6. In terms of biological role, transfers the gamma-phosphate of ATP to the 4'-position of a tetraacyldisaccharide 1-phosphate intermediate (termed DS-1-P) to form tetraacyldisaccharide 1,4'-bis-phosphate (lipid IVA). The chain is Tetraacyldisaccharide 4'-kinase from Xylella fastidiosa (strain 9a5c).